The primary structure comprises 328 residues: Probable D,D-dipeptide transport ATP-binding protein DdpD (328 aa).

Residues 6-257 enclose the ABC transporter domain; the sequence is LDIQQLHLSF…PRHPYTIGLL (252 aa). 42-49 is an ATP binding site; it reads GESGSGKS.

It belongs to the ABC transporter superfamily. As to quaternary structure, the complex is composed of two ATP-binding proteins (DdpD and DdpF), two transmembrane proteins (DdpB and DdpC) and a solute-binding protein (DdpA).

The protein resides in the cell inner membrane. Functionally, part of the ABC transporter complex DdpABCDF, which is probably involved in D,D-dipeptide transport. Probably responsible for energy coupling to the transport system. This chain is Probable D,D-dipeptide transport ATP-binding protein DdpD, found in Escherichia coli (strain K12).